The sequence spans 260 residues: Imidazole glycerol phosphate synthase subunit HisF (260 aa).

Active-site residues include Asp11 and Asp130.

It belongs to the HisA/HisF family. Heterodimer of HisH and HisF.

It is found in the cytoplasm. The catalysed reaction is 5-[(5-phospho-1-deoxy-D-ribulos-1-ylimino)methylamino]-1-(5-phospho-beta-D-ribosyl)imidazole-4-carboxamide + L-glutamine = D-erythro-1-(imidazol-4-yl)glycerol 3-phosphate + 5-amino-1-(5-phospho-beta-D-ribosyl)imidazole-4-carboxamide + L-glutamate + H(+). Its pathway is amino-acid biosynthesis; L-histidine biosynthesis; L-histidine from 5-phospho-alpha-D-ribose 1-diphosphate: step 5/9. IGPS catalyzes the conversion of PRFAR and glutamine to IGP, AICAR and glutamate. The HisF subunit catalyzes the cyclization activity that produces IGP and AICAR from PRFAR using the ammonia provided by the HisH subunit. The protein is Imidazole glycerol phosphate synthase subunit HisF of Caulobacter sp. (strain K31).